The chain runs to 367 residues: Developmentally-regulated GTP-binding protein 1 (367 aa).

The residue at position 2 (serine 2) is an N-acetylserine. The segment at 2-16 (SSTLAKIAEIEAEMA) is required for interaction with STK16. Lysine 22 is subject to (3S)-3-hydroxylysine. The OBG-type G domain occupies 65 to 290 (ARIGFVGFPS…LLEKIWDYLK (226 aa)). Residues 71–78 (GFPSVGKS), 96–100 (FTTLT), 117–120 (DLPG), 248–251 (NKID), and 271–273 (SAH) contribute to the GTP site. Mg(2+) is bound by residues serine 78 and threonine 98. A Phosphothreonine; by STK16 modification is found at threonine 100. The TGS domain occupies 290-366 (KLVRIYTKPK…EDEDVIQIVK (77 aa)).

Belongs to the TRAFAC class OBG-HflX-like GTPase superfamily. OBG GTPase family. Interacts (via its C-terminal) with TAL1. Interacts with DFRP1/ZC3H15; this interaction prevents DRG1 poly-ubiquitination and degradation by proteasome. DRG1-ZC3H15/DFRP1 complex co-sediments with polysomes. Interacts with STK16. Interacts with JMJD7. In terms of processing, sumoylated by UBE2I in response to MEKK1-mediated stimuli. Post-translationally, hydroxylated (with S stereochemistry) at C-3 of Lys-22 by JMJD7. Phosphorylated at Thr-100 by STK16. In terms of processing, polyubiquitinated; this modification induces proteolytic degradation and is impaired by interaction with ZC3H15.

It is found in the nucleus. The protein resides in the cytoplasm. It carries out the reaction GTP + H2O = GDP + phosphate + H(+). The GTPase activity is enhanced by potassium ions as well as by DFRP1 binding. Functionally, catalyzes the conversion of GTP to GDP through hydrolysis of the gamma-phosphate bond in GTP. Appears to have an intrinsic GTPase activity that is stimulated by ZC3H15/DFRP1 binding likely by increasing the affinity for the potassium ions. When hydroxylated at C-3 of 'Lys-22' by JMJD7, may bind to RNA and play a role in translation. Binds to microtubules and promotes microtubule polymerization and bundling that are required for mitotic spindle assembly during prophase to anaphase transition. GTPase activity is not necessary for these microtubule-related functions. The protein is Developmentally-regulated GTP-binding protein 1 (DRG1) of Bos taurus (Bovine).